The primary structure comprises 315 residues: Acetyl-coenzyme A carboxylase carboxyl transferase subunit beta, chloroplastic (315 aa).

The region spanning 47–315 (LWTRCDSCEN…VYKESNSYLF (269 aa)) is the CoA carboxyltransferase N-terminal domain. Positions 51, 54, 70, and 73 each coordinate Zn(2+). Residues 51–73 (CDSCENMLYVRFLKQNKRICEEC) form a C4-type zinc finger.

This sequence belongs to the AccD/PCCB family. As to quaternary structure, acetyl-CoA carboxylase is a heterohexamer composed of biotin carboxyl carrier protein, biotin carboxylase and 2 subunits each of ACCase subunit alpha and ACCase plastid-coded subunit beta (accD). Requires Zn(2+) as cofactor.

It is found in the plastid. The protein localises to the chloroplast stroma. The enzyme catalyses N(6)-carboxybiotinyl-L-lysyl-[protein] + acetyl-CoA = N(6)-biotinyl-L-lysyl-[protein] + malonyl-CoA. The protein operates within lipid metabolism; malonyl-CoA biosynthesis; malonyl-CoA from acetyl-CoA: step 1/1. Component of the acetyl coenzyme A carboxylase (ACC) complex. Biotin carboxylase (BC) catalyzes the carboxylation of biotin on its carrier protein (BCCP) and then the CO(2) group is transferred by the transcarboxylase to acetyl-CoA to form malonyl-CoA. This chain is Acetyl-coenzyme A carboxylase carboxyl transferase subunit beta, chloroplastic, found in Physcomitrium patens (Spreading-leaved earth moss).